Consider the following 383-residue polypeptide: MHASTLTRCMRVAQNARCLSTAAASVQVTHSERGARLAALRERLAEETRQGPTFAEQALSLEDFAFEADAAPGTKPSRKPNASNRKPKWLKAQPTQGANYERLRKSVKSLGLSTVCEEAKCPNIGECWGGGKDGIATATIMLMGDTCTRGCSFCAVKTSRKPKPLDIEEPNKVAEAIAAWGLDYIVFTSVDRDDYEDLGAGHFAKTVSTLRAKLPEILIECLTPDFQGHDNLIDQVATSGLDVFAHNMETVERLQRRVRDYRANYKQSLHVLERAKVAAPHLVTKTSLMLGVGERNEDLFQTLRDLRNSGVDVVTFGQYLRPSTKHMPVKSYVTPEAFAEWQKVAEQMGFLYVASGPMVRSSYKAGEFFMKNLLKNRKTQVVA.

The N-terminal 19 residues, 1–19 (MHASTLTRCMRVAQNARCL), are a transit peptide targeting the mitochondrion. The disordered stretch occupies residues 69–97 (DAAPGTKPSRKPNASNRKPKWLKAQPTQG). Residues cysteine 116, cysteine 121, cysteine 127, cysteine 147, cysteine 151, cysteine 154, and serine 362 each contribute to the [4Fe-4S] cluster site. One can recognise a Radical SAM core domain in the interval 132-351 (KDGIATATIM…QKVAEQMGFL (220 aa)).

Belongs to the radical SAM superfamily. Lipoyl synthase family. Requires [4Fe-4S] cluster as cofactor.

It localises to the mitochondrion. The enzyme catalyses [[Fe-S] cluster scaffold protein carrying a second [4Fe-4S](2+) cluster] + N(6)-octanoyl-L-lysyl-[protein] + 2 oxidized [2Fe-2S]-[ferredoxin] + 2 S-adenosyl-L-methionine + 4 H(+) = [[Fe-S] cluster scaffold protein] + N(6)-[(R)-dihydrolipoyl]-L-lysyl-[protein] + 4 Fe(3+) + 2 hydrogen sulfide + 2 5'-deoxyadenosine + 2 L-methionine + 2 reduced [2Fe-2S]-[ferredoxin]. It functions in the pathway protein modification; protein lipoylation via endogenous pathway; protein N(6)-(lipoyl)lysine from octanoyl-[acyl-carrier-protein]: step 2/2. Functionally, catalyzes the radical-mediated insertion of two sulfur atoms into the C-6 and C-8 positions of the octanoyl moiety bound to the lipoyl domains of lipoate-dependent enzymes, thereby converting the octanoylated domains into lipoylated derivatives. This chain is Lipoyl synthase, mitochondrial, found in Phytophthora infestans (strain T30-4) (Potato late blight agent).